The primary structure comprises 400 residues: Phosphoglycerate kinase (400 aa).

Substrate contacts are provided by residues 24–26 (DFN), Arg-40, 63–66 (HFGR), Arg-121, and Arg-154. Residues Lys-205, Gly-296, Glu-327, and 356-359 (GGDS) each bind ATP.

Belongs to the phosphoglycerate kinase family. Monomer.

Its subcellular location is the cytoplasm. The enzyme catalyses (2R)-3-phosphoglycerate + ATP = (2R)-3-phospho-glyceroyl phosphate + ADP. It functions in the pathway carbohydrate degradation; glycolysis; pyruvate from D-glyceraldehyde 3-phosphate: step 2/5. The polypeptide is Phosphoglycerate kinase (Thermosynechococcus vestitus (strain NIES-2133 / IAM M-273 / BP-1)).